Reading from the N-terminus, the 340-residue chain is Putative esterase YheT (340 aa).

Residues 73–312 (PRLVVFHGLE…TEHGGHVGFI (240 aa)) form the AB hydrolase-1 domain. Active-site charge relay system residues include serine 153, aspartate 280, and histidine 308.

This sequence belongs to the AB hydrolase superfamily. AB hydrolase 4 family.

The protein is Putative esterase YheT (yheT) of Escherichia coli (strain K12).